We begin with the raw amino-acid sequence, 455 residues long: MEVVILAAGQGKRMRSALPKVLQPIAGRPMLEHVIAAAQALEARRICVVHGHGGEAVRARLQHAAVQWALQQPQLGTGHAVLQALPHLTDGDMALVLYGDVPLIGVPTLRRLEAAAGGERLALLTVELADPSGYGRILRDGAGRVVRIVEEKDASADERRVREVNTGILVAPVARLRDWLARLGNDNAQREYYLTDIIGMAVAEGVEVTTVQPDAIWETLGVNSKAQLAELERLHQRNIATRLMEDGVTLFDPSRIDVRGELLCGRDVEIDVNCVFEGRVEIADDVRIGANCVIRNARIGAGTRLAPFSHVEDTTTGRDCVIGPYARTRPGTTLGDGVHLGNFVEVKNSAIADDSKANHLAYIGDADIGRRVNVGAGTITCNYDGANKYRTTIGDDVFIGSDTQLVAPVRVGRGATLGAGTTLTKDAPEDQLTVSRARQISIPGWKRPVKKKAGE.

The segment at methionine 1–lysine 225 is pyrophosphorylase. UDP-N-acetyl-alpha-D-glucosamine is bound by residues leucine 6 to glycine 9, lysine 20, glutamine 71, glycine 76 to threonine 77, tyrosine 98 to aspartate 100, glycine 135, glutamate 150, asparagine 165, and asparagine 223. A Mg(2+)-binding site is contributed by aspartate 100. Residue asparagine 223 coordinates Mg(2+). The tract at residues alanine 226–aspartate 246 is linker. An N-acetyltransferase region spans residues glycine 247 to glutamate 455. UDP-N-acetyl-alpha-D-glucosamine is bound by residues arginine 329 and lysine 347. Histidine 359 (proton acceptor) is an active-site residue. Tyrosine 362 and asparagine 373 together coordinate UDP-N-acetyl-alpha-D-glucosamine. Acetyl-CoA is bound by residues alanine 376, asparagine 382–tyrosine 383, serine 401, alanine 419, and arginine 436.

In the N-terminal section; belongs to the N-acetylglucosamine-1-phosphate uridyltransferase family. The protein in the C-terminal section; belongs to the transferase hexapeptide repeat family. Homotrimer. Mg(2+) is required as a cofactor.

It is found in the cytoplasm. The enzyme catalyses alpha-D-glucosamine 1-phosphate + acetyl-CoA = N-acetyl-alpha-D-glucosamine 1-phosphate + CoA + H(+). It carries out the reaction N-acetyl-alpha-D-glucosamine 1-phosphate + UTP + H(+) = UDP-N-acetyl-alpha-D-glucosamine + diphosphate. Its pathway is nucleotide-sugar biosynthesis; UDP-N-acetyl-alpha-D-glucosamine biosynthesis; N-acetyl-alpha-D-glucosamine 1-phosphate from alpha-D-glucosamine 6-phosphate (route II): step 2/2. The protein operates within nucleotide-sugar biosynthesis; UDP-N-acetyl-alpha-D-glucosamine biosynthesis; UDP-N-acetyl-alpha-D-glucosamine from N-acetyl-alpha-D-glucosamine 1-phosphate: step 1/1. It functions in the pathway bacterial outer membrane biogenesis; LPS lipid A biosynthesis. In terms of biological role, catalyzes the last two sequential reactions in the de novo biosynthetic pathway for UDP-N-acetylglucosamine (UDP-GlcNAc). The C-terminal domain catalyzes the transfer of acetyl group from acetyl coenzyme A to glucosamine-1-phosphate (GlcN-1-P) to produce N-acetylglucosamine-1-phosphate (GlcNAc-1-P), which is converted into UDP-GlcNAc by the transfer of uridine 5-monophosphate (from uridine 5-triphosphate), a reaction catalyzed by the N-terminal domain. The sequence is that of Bifunctional protein GlmU from Aromatoleum aromaticum (strain DSM 19018 / LMG 30748 / EbN1) (Azoarcus sp. (strain EbN1)).